The following is a 545-amino-acid chain: CTP synthase (545 aa).

Residues 1–266 are amidoligase domain; the sequence is MTTNYIFVTG…DDYICKRFGL (266 aa). Serine 14 is a CTP binding site. A UTP-binding site is contributed by serine 14. ATP is bound by residues 15-20 and aspartate 72; that span reads SLGKGI. The Mg(2+) site is built by aspartate 72 and glutamate 140. CTP contacts are provided by residues 147 to 149, 187 to 192, and lysine 223; these read DIE and KTKPTQ. Residues 187–192 and lysine 223 each bind UTP; that span reads KTKPTQ. 239-241 provides a ligand contact to ATP; sequence KDV. The region spanning 291 to 542 is the Glutamine amidotransferase type-1 domain; it reads TIGMVGKYIA…VKAAGEYQKR (252 aa). Position 352 (glycine 352) interacts with L-glutamine. Cysteine 379 serves as the catalytic Nucleophile; for glutamine hydrolysis. L-glutamine-binding positions include 380-383, glutamate 403, and arginine 470; that span reads LGMQ. Active-site residues include histidine 515 and glutamate 517.

Belongs to the CTP synthase family. Homotetramer.

It catalyses the reaction UTP + L-glutamine + ATP + H2O = CTP + L-glutamate + ADP + phosphate + 2 H(+). The catalysed reaction is L-glutamine + H2O = L-glutamate + NH4(+). The enzyme catalyses UTP + NH4(+) + ATP = CTP + ADP + phosphate + 2 H(+). It participates in pyrimidine metabolism; CTP biosynthesis via de novo pathway; CTP from UDP: step 2/2. Allosterically activated by GTP, when glutamine is the substrate; GTP has no effect on the reaction when ammonia is the substrate. The allosteric effector GTP functions by stabilizing the protein conformation that binds the tetrahedral intermediate(s) formed during glutamine hydrolysis. Inhibited by the product CTP, via allosteric rather than competitive inhibition. Functionally, catalyzes the ATP-dependent amination of UTP to CTP with either L-glutamine or ammonia as the source of nitrogen. Regulates intracellular CTP levels through interactions with the four ribonucleotide triphosphates. In Sodalis glossinidius (strain morsitans), this protein is CTP synthase.